Here is a 703-residue protein sequence, read N- to C-terminus: uncharacterized protein (703 aa).

A run of 4 helical transmembrane segments spans residues 23–43, 69–89, 143–163, and 250–270; these read IAMSGAISAGAYSAGVFDFLI, ALSGASAGAITAAIGVIAAGG, PVISVLNANVLTAIGAEALEA, and PPEWLAFANAALASGAFPIGL. Residues 23-335 form the PNPLA domain; sequence IAMSGAISAG…INNDPFEFVR (313 aa). The GXSXG motif lies at 72–76; sequence GASAG. S74 acts as the Nucleophile in catalysis. Catalysis depends on D322, which acts as the Proton acceptor. The DGA/G motif lies at 322–324; it reads DGG. The next 3 helical transmembrane spans lie at 357–377, 432–452, and 644–664; these read VIMIAPFPEGPPFLGDGEPPL, ETFSIASGLLGGFGGFVLEAF, and ILSTLAGAAGANCQVWLAPWT.

Its subcellular location is the cell membrane. This is an uncharacterized protein from Sinorhizobium fredii (strain NBRC 101917 / NGR234).